Reading from the N-terminus, the 89-residue chain is Small ribosomal subunit protein uS15 (89 aa).

It belongs to the universal ribosomal protein uS15 family. As to quaternary structure, part of the 30S ribosomal subunit. Forms a bridge to the 50S subunit in the 70S ribosome, contacting the 23S rRNA.

Functionally, one of the primary rRNA binding proteins, it binds directly to 16S rRNA where it helps nucleate assembly of the platform of the 30S subunit by binding and bridging several RNA helices of the 16S rRNA. Its function is as follows. Forms an intersubunit bridge (bridge B4) with the 23S rRNA of the 50S subunit in the ribosome. This chain is Small ribosomal subunit protein uS15, found in Maridesulfovibrio salexigens (strain ATCC 14822 / DSM 2638 / NCIMB 8403 / VKM B-1763) (Desulfovibrio salexigens).